A 319-amino-acid polypeptide reads, in one-letter code: Acetyl-coenzyme A carboxylase carboxyl transferase subunit alpha (319 aa).

The CoA carboxyltransferase C-terminal domain maps to 38 to 292; that stretch reads ALDKKAADLL…GKAIASMLAG (255 aa).

The protein belongs to the AccA family. As to quaternary structure, acetyl-CoA carboxylase is a heterohexamer composed of biotin carboxyl carrier protein (AccB), biotin carboxylase (AccC) and two subunits each of ACCase subunit alpha (AccA) and ACCase subunit beta (AccD).

It localises to the cytoplasm. It carries out the reaction N(6)-carboxybiotinyl-L-lysyl-[protein] + acetyl-CoA = N(6)-biotinyl-L-lysyl-[protein] + malonyl-CoA. The protein operates within lipid metabolism; malonyl-CoA biosynthesis; malonyl-CoA from acetyl-CoA: step 1/1. Functionally, component of the acetyl coenzyme A carboxylase (ACC) complex. First, biotin carboxylase catalyzes the carboxylation of biotin on its carrier protein (BCCP) and then the CO(2) group is transferred by the carboxyltransferase to acetyl-CoA to form malonyl-CoA. This is Acetyl-coenzyme A carboxylase carboxyl transferase subunit alpha from Jannaschia sp. (strain CCS1).